The following is a 265-amino-acid chain: Aquaporin-5 (265 aa).

Over 1–12 (MKKEVCSVAFLK) the chain is Cytoplasmic. The helical transmembrane segment at 13-33 (AVFAEFLATLIFVFFGLGSAL) threads the bilayer. The Extracellular portion of the chain corresponds to 34–39 (KWPSAL). Residues 40–60 (PTILQIALAFGLAIGTLAQAL) form a helical membrane-spanning segment. Topologically, residues 61-65 (GPVSG) are cytoplasmic. The discontinuously helical intramembrane region spans 66-74 (GHINPAITL). The NPA 1 motif lies at 69-71 (NPA). Residues 75–87 (ALLVGNQISLLRA) are Cytoplasmic-facing. A helical membrane pass occupies residues 88 to 108 (FFYVAAQLVGAIAGAGILYGV). Residues 109–126 (APLNARGNLAVNALNNNT) are Extracellular-facing. Asn-124 and Asn-125 each carry an N-linked (GlcNAc...) asparagine glycan. Residues 127–147 (TQGQAMVVELILTFQLALCIF) form a helical membrane-spanning segment. Over 148 to 158 (ASTDSRRTSPV) the chain is Cytoplasmic. The chain crosses the membrane as a helical span at residues 159-179 (GSPALSIGLSVTLGHLVGIYF). A topological domain (extracellular) is located at residue Thr-180. Positions 181–191 (GCSMNPARSFG) form an intramembrane region, discontinuously helical. The short motif at 185-187 (NPA) is the NPA 2 element. The Extracellular segment spans residues 192–203 (PAVVMNRFSPAH). Residues 204–224 (WVFWVGPIVGAVLAAILYFYL) form a helical membrane-spanning segment. Topologically, residues 225 to 265 (LFPNSLSLSERVAIIKGTYEPDEDWEEQREERKKTMELTTR) are cytoplasmic.

This sequence belongs to the MIP/aquaporin (TC 1.A.8) family. As to quaternary structure, homotetramer; each monomer provides an independent water pore. Interacts with TRPV4; the interaction is probably indirect and regulates TRPV4 activation by hypotonicity. As to expression, detected in skin eccrine sweat glands, at the apical cell membrane and at intercellular canaliculi (at protein level).

Its subcellular location is the apical cell membrane. The protein localises to the cell membrane. It is found in the cytoplasmic vesicle membrane. The catalysed reaction is H2O(in) = H2O(out). Functionally, aquaporins form homotetrameric transmembrane channels, with each monomer independently mediating water transport across the plasma membrane along its osmotic gradient. Plays an important role in fluid secretion in salivary glands. Required for TRPV4 activation by hypotonicity. Together with TRPV4, controls regulatory volume decrease in salivary epithelial cells. Seems to play a redundant role in water transport in the eye, lung and in sweat glands. The sequence is that of Aquaporin-5 from Homo sapiens (Human).